The chain runs to 101 residues: NAD(P)H-quinone oxidoreductase subunit 4L, chloroplastic (101 aa).

3 consecutive transmembrane segments (helical) span residues 2-22 (MTEYVLILSAYLFSIGIYGLI), 32-52 (MCLELILNAVNMNLVTFSDLF), and 61-81 (IFSIFVIAIAAAEAAIGPAIV).

Belongs to the complex I subunit 4L family. NDH is composed of at least 16 different subunits, 5 of which are encoded in the nucleus.

It localises to the plastid. The protein localises to the chloroplast thylakoid membrane. The catalysed reaction is a plastoquinone + NADH + (n+1) H(+)(in) = a plastoquinol + NAD(+) + n H(+)(out). It carries out the reaction a plastoquinone + NADPH + (n+1) H(+)(in) = a plastoquinol + NADP(+) + n H(+)(out). Its function is as follows. NDH shuttles electrons from NAD(P)H:plastoquinone, via FMN and iron-sulfur (Fe-S) centers, to quinones in the photosynthetic chain and possibly in a chloroplast respiratory chain. The immediate electron acceptor for the enzyme in this species is believed to be plastoquinone. Couples the redox reaction to proton translocation, and thus conserves the redox energy in a proton gradient. This chain is NAD(P)H-quinone oxidoreductase subunit 4L, chloroplastic, found in Calycanthus floridus var. glaucus (Eastern sweetshrub).